A 342-amino-acid polypeptide reads, in one-letter code: S-adenosylmethionine:tRNA ribosyltransferase-isomerase (342 aa).

The protein belongs to the QueA family. In terms of assembly, monomer.

It is found in the cytoplasm. The catalysed reaction is 7-aminomethyl-7-carbaguanosine(34) in tRNA + S-adenosyl-L-methionine = epoxyqueuosine(34) in tRNA + adenine + L-methionine + 2 H(+). Its pathway is tRNA modification; tRNA-queuosine biosynthesis. Transfers and isomerizes the ribose moiety from AdoMet to the 7-aminomethyl group of 7-deazaguanine (preQ1-tRNA) to give epoxyqueuosine (oQ-tRNA). The polypeptide is S-adenosylmethionine:tRNA ribosyltransferase-isomerase (Novosphingobium aromaticivorans (strain ATCC 700278 / DSM 12444 / CCUG 56034 / CIP 105152 / NBRC 16084 / F199)).